A 290-amino-acid polypeptide reads, in one-letter code: Cell division protein ZipA (290 aa).

A topological domain (periplasmic) is located at residue M1. Residues D2–F22 traverse the membrane as a helical segment. Topologically, residues D23–R290 are cytoplasmic. The segment at R66 to A143 is disordered. The span at R81–D99 shows a compositional bias: basic and acidic residues. Positions L100 to D114 are enriched in acidic residues.

It belongs to the ZipA family. In terms of assembly, interacts with FtsZ via their C-terminal domains.

The protein localises to the cell inner membrane. Its function is as follows. Essential cell division protein that stabilizes the FtsZ protofilaments by cross-linking them and that serves as a cytoplasmic membrane anchor for the Z ring. Also required for the recruitment to the septal ring of downstream cell division proteins. In Pseudomonas paraeruginosa (strain DSM 24068 / PA7) (Pseudomonas aeruginosa (strain PA7)), this protein is Cell division protein ZipA.